The primary structure comprises 252 residues: Indole-3-glycerol phosphate synthase (252 aa).

It belongs to the TrpC family.

It carries out the reaction 1-(2-carboxyphenylamino)-1-deoxy-D-ribulose 5-phosphate + H(+) = (1S,2R)-1-C-(indol-3-yl)glycerol 3-phosphate + CO2 + H2O. Its pathway is amino-acid biosynthesis; L-tryptophan biosynthesis; L-tryptophan from chorismate: step 4/5. The polypeptide is Indole-3-glycerol phosphate synthase (Listeria monocytogenes serotype 4a (strain HCC23)).